We begin with the raw amino-acid sequence, 597 residues long: Aspartate--tRNA ligase (597 aa).

Glutamate 171 is an L-aspartate binding site. Positions 195–198 (QLFK) are aspartate. Arginine 217 is a binding site for L-aspartate. ATP-binding positions include 217-219 (RDE) and glutamine 226. Histidine 448 contacts L-aspartate. Residue glutamate 482 participates in ATP binding. Position 489 (arginine 489) interacts with L-aspartate. Residue 534 to 537 (GLDR) coordinates ATP.

It belongs to the class-II aminoacyl-tRNA synthetase family. Type 1 subfamily. Homodimer.

It localises to the cytoplasm. It carries out the reaction tRNA(Asp) + L-aspartate + ATP = L-aspartyl-tRNA(Asp) + AMP + diphosphate. Its function is as follows. Catalyzes the attachment of L-aspartate to tRNA(Asp) in a two-step reaction: L-aspartate is first activated by ATP to form Asp-AMP and then transferred to the acceptor end of tRNA(Asp). This chain is Aspartate--tRNA ligase, found in Photobacterium profundum (strain SS9).